A 990-amino-acid chain; its full sequence is Insulin-degrading enzyme (990 aa).

Histidine 81 provides a ligand contact to Zn(2+). Glutamate 84 serves as the catalytic Proton acceptor. Histidine 85 and glutamate 162 together coordinate Zn(2+).

The protein belongs to the peptidase M16 family. Zn(2+) is required as a cofactor.

The catalysed reaction is Degradation of insulin, glucagon and other polypeptides. No action on proteins.. In terms of biological role, can cleave insulin and TGF-alpha. The chain is Insulin-degrading enzyme (Ide) from Drosophila melanogaster (Fruit fly).